Reading from the N-terminus, the 274-residue chain is Nitrogenase iron protein (274 aa).

8-15 (GKGGIGKS) is an ATP binding site. Cysteine 94 serves as a coordination point for [4Fe-4S] cluster. The residue at position 97 (arginine 97) is an ADP-ribosylarginine; by dinitrogenase reductase ADP-ribosyltransferase. Residue cysteine 131 coordinates [4Fe-4S] cluster.

The protein belongs to the NifH/BchL/ChlL family. As to quaternary structure, homodimer. It depends on [4Fe-4S] cluster as a cofactor. Post-translationally, the reversible ADP-ribosylation of Arg-97 inactivates the nitrogenase reductase and regulates nitrogenase activity.

The catalysed reaction is N2 + 8 reduced [2Fe-2S]-[ferredoxin] + 16 ATP + 16 H2O = H2 + 8 oxidized [2Fe-2S]-[ferredoxin] + 2 NH4(+) + 16 ADP + 16 phosphate + 6 H(+). Its function is as follows. The key enzymatic reactions in nitrogen fixation are catalyzed by the nitrogenase complex, which has 2 components: the iron protein and the molybdenum-iron protein. The sequence is that of Nitrogenase iron protein from Chlorobium phaeobacteroides (strain DSM 266 / SMG 266 / 2430).